Consider the following 1034-residue polypeptide: Isoleucine--tRNA ligase (1034 aa).

Residues 46-56 (PYCSGAIHLGT) carry the 'HIGH' region motif. The 'KMSKS' region signature appears at 598–602 (KMSKS). Lysine 601 is a binding site for ATP.

It belongs to the class-I aminoacyl-tRNA synthetase family. IleS type 2 subfamily. In terms of assembly, monomer. Zn(2+) is required as a cofactor.

Its subcellular location is the cytoplasm. The enzyme catalyses tRNA(Ile) + L-isoleucine + ATP = L-isoleucyl-tRNA(Ile) + AMP + diphosphate. Catalyzes the attachment of isoleucine to tRNA(Ile). As IleRS can inadvertently accommodate and process structurally similar amino acids such as valine, to avoid such errors it has two additional distinct tRNA(Ile)-dependent editing activities. One activity is designated as 'pretransfer' editing and involves the hydrolysis of activated Val-AMP. The other activity is designated 'posttransfer' editing and involves deacylation of mischarged Val-tRNA(Ile). In Methanococcus maripaludis (strain DSM 14266 / JCM 13030 / NBRC 101832 / S2 / LL), this protein is Isoleucine--tRNA ligase.